We begin with the raw amino-acid sequence, 135 residues long: UPF0102 protein PGN_1801 (135 aa).

It belongs to the UPF0102 family.

This Porphyromonas gingivalis (strain ATCC 33277 / DSM 20709 / CIP 103683 / JCM 12257 / NCTC 11834 / 2561) protein is UPF0102 protein PGN_1801.